The chain runs to 102 residues: MVHKLTSEERKTRLERLPQWSAVPGRDAIQRSLRFADFNEAFGFMTRVAIKAQEMNHHPEWFNVYNRVDVTLSTHDADGLTERDIELALFIDAVAAHARPAS.

The protein belongs to the pterin-4-alpha-carbinolamine dehydratase family.

The enzyme catalyses (4aS,6R)-4a-hydroxy-L-erythro-5,6,7,8-tetrahydrobiopterin = (6R)-L-erythro-6,7-dihydrobiopterin + H2O. The protein is Putative pterin-4-alpha-carbinolamine dehydratase of Burkholderia multivorans (strain ATCC 17616 / 249).